Here is a 477-residue protein sequence, read N- to C-terminus: Exodeoxyribonuclease 7 large subunit (477 aa).

Residues 456 to 477 are disordered; that stretch reads GGTVAPRKAPPKKPGGGQGSLL.

This sequence belongs to the XseA family. In terms of assembly, heterooligomer composed of large and small subunits.

The protein resides in the cytoplasm. It carries out the reaction Exonucleolytic cleavage in either 5'- to 3'- or 3'- to 5'-direction to yield nucleoside 5'-phosphates.. In terms of biological role, bidirectionally degrades single-stranded DNA into large acid-insoluble oligonucleotides, which are then degraded further into small acid-soluble oligonucleotides. This Parvibaculum lavamentivorans (strain DS-1 / DSM 13023 / NCIMB 13966) protein is Exodeoxyribonuclease 7 large subunit.